Reading from the N-terminus, the 99-residue chain is uncharacterized protein (99 aa).

The stretch at 43–95 forms a coiled coil; it reads ENEEIYADQVRRIKLRLRELRETYATSEDNWRELMDNLEELRDQIERLAIRGG.

This is an uncharacterized protein from Archaeoglobus fulgidus (strain ATCC 49558 / DSM 4304 / JCM 9628 / NBRC 100126 / VC-16).